Reading from the N-terminus, the 411-residue chain is Methylthioribose-1-phosphate isomerase (411 aa).

Position 2 is an N-acetylserine (Ser2). The active-site Proton donor is Asp280. Residue Ser351 is modified to Phosphoserine.

The protein belongs to the eIF-2B alpha/beta/delta subunits family. MtnA subfamily. As to quaternary structure, homodimer.

Its subcellular location is the cytoplasm. The protein localises to the nucleus. The catalysed reaction is 5-(methylsulfanyl)-alpha-D-ribose 1-phosphate = 5-(methylsulfanyl)-D-ribulose 1-phosphate. The protein operates within amino-acid biosynthesis; L-methionine biosynthesis via salvage pathway; L-methionine from S-methyl-5-thio-alpha-D-ribose 1-phosphate: step 1/6. Functionally, catalyzes the interconversion of methylthioribose-1-phosphate (MTR-1-P) into methylthioribulose-1-phosphate (MTRu-1-P). This chain is Methylthioribose-1-phosphate isomerase, found in Saccharomyces cerevisiae (strain RM11-1a) (Baker's yeast).